A 196-amino-acid chain; its full sequence is MGWWLFPILGYFIGSIPFSYLIPKWLKGIDVRKVGSGNVGATNAIRTTGPAVGGICLLLDALKGFFPVFITITFSGDSKIVSLTAIATVLGHDFPIFMKFKGGKGVASTLGIIFCLSWPTGLVFTLTWLVIVMLTKYASLGSLVALYVSALLGYLLKGYDTGMLFLILAVLSTLRHSENIQRLLNGTERKVNLFKR.

The next 5 membrane-spanning stretches (helical) occupy residues 2-22 (GWWL…SYLI), 52-72 (VGGI…FITI), 80-100 (IVSL…FMKF), 112-132 (IIFC…LVIV), and 137-156 (YASL…GYLL).

This sequence belongs to the PlsY family. In terms of assembly, probably interacts with PlsX.

The protein resides in the cell inner membrane. The enzyme catalyses an acyl phosphate + sn-glycerol 3-phosphate = a 1-acyl-sn-glycero-3-phosphate + phosphate. The protein operates within lipid metabolism; phospholipid metabolism. In terms of biological role, catalyzes the transfer of an acyl group from acyl-phosphate (acyl-PO(4)) to glycerol-3-phosphate (G3P) to form lysophosphatidic acid (LPA). This enzyme utilizes acyl-phosphate as fatty acyl donor, but not acyl-CoA or acyl-ACP. The protein is Glycerol-3-phosphate acyltransferase 2 of Thermotoga maritima (strain ATCC 43589 / DSM 3109 / JCM 10099 / NBRC 100826 / MSB8).